The sequence spans 143 residues: Phosphatidylethanolamine-binding protein homolog R644 (143 aa).

Belongs to the phosphatidylethanolamine-binding protein family.

It localises to the virion. This Acanthamoeba polyphaga mimivirus (APMV) protein is Phosphatidylethanolamine-binding protein homolog R644.